A 147-amino-acid polypeptide reads, in one-letter code: Sec-independent protein translocase protein TatB (147 aa).

The chain crosses the membrane as a helical span at residues 1–21 (MFDFGFSELIVIAVVTLIVVG). The tract at residues 117–147 (APAPMSLAPHGDAASAGREPAAVPGSGPEKA) is disordered.

It belongs to the TatB family. As to quaternary structure, the Tat system comprises two distinct complexes: a TatABC complex, containing multiple copies of TatA, TatB and TatC subunits, and a separate TatA complex, containing only TatA subunits. Substrates initially bind to the TatABC complex, which probably triggers association of the separate TatA complex to form the active translocon.

It localises to the cell inner membrane. Functionally, part of the twin-arginine translocation (Tat) system that transports large folded proteins containing a characteristic twin-arginine motif in their signal peptide across membranes. Together with TatC, TatB is part of a receptor directly interacting with Tat signal peptides. TatB may form an oligomeric binding site that transiently accommodates folded Tat precursor proteins before their translocation. In Aromatoleum aromaticum (strain DSM 19018 / LMG 30748 / EbN1) (Azoarcus sp. (strain EbN1)), this protein is Sec-independent protein translocase protein TatB.